The primary structure comprises 206 residues: Ribosomal RNA small subunit methyltransferase G (206 aa).

Residues G73, L78, 124–125, and R139 contribute to the S-adenosyl-L-methionine site; that span reads VE.

It belongs to the methyltransferase superfamily. RNA methyltransferase RsmG family.

It is found in the cytoplasm. The enzyme catalyses guanosine(527) in 16S rRNA + S-adenosyl-L-methionine = N(7)-methylguanosine(527) in 16S rRNA + S-adenosyl-L-homocysteine. In terms of biological role, specifically methylates the N7 position of guanine in position 527 of 16S rRNA. This chain is Ribosomal RNA small subunit methyltransferase G, found in Pectobacterium carotovorum subsp. carotovorum (strain PC1).